Here is a 1085-residue protein sequence, read N- to C-terminus: DNA repair and recombination protein RAD26 (1085 aa).

At Ser-30 the chain carries Phosphoserine. Disordered stretches follow at residues 118 to 141 (KEQVDQGAENKGSKEGLQRPGETE) and 190 to 219 (NLTDEDDNLSDQDYQMSGKESEDDEEEEND). Residues 128-141 (KGSKEGLQRPGETE) show a composition bias toward basic and acidic residues. Residues 210 to 219 (SEDDEEEEND) are compositionally biased toward acidic residues. The 210-residue stretch at 309–518 (YELYQQNCGG…WSLFDFIFPG (210 aa)) folds into the Helicase ATP-binding domain. Residue 322 to 329 (DEMGLGKT) coordinates ATP. The DEGH box signature appears at 469 to 472 (DEGH). A Helicase C-terminal domain is found at 655 to 818 (VVKQLLLLWH…KRFFKIHELH (164 aa)).

It belongs to the SNF2/RAD54 helicase family.

The protein localises to the nucleus. The enzyme catalyses ATP + H2O = ADP + phosphate + H(+). May be involved in the preferential repair of active genes. This is DNA repair and recombination protein RAD26 (RAD26) from Saccharomyces cerevisiae (strain ATCC 204508 / S288c) (Baker's yeast).